Consider the following 179-residue polypeptide: Interleukin-22 (179 aa).

A signal peptide spans 1 to 33 (MAALQKSVSSFLMGTLATSCLLLLALLVQGGAA). 2 cysteine pairs are disulfide-bonded: Cys40-Cys132 and Cys89-Cys178. N-linked (GlcNAc...) asparagine glycosylation is found at Asn54, Asn68, and Asn97.

The protein belongs to the IL-10 family.

The protein localises to the secreted. Cytokine that plays a critical role in modulating tissue responses during inflammation. Plays an essential role in the regeneration of epithelial cells to maintain barrier function after injury and for the prevention of further tissue damage. Unlike most of the cytokines, has no effect on immune cells. Signals through a heterodimeric receptor composed of two subunits, the specific receptor IL22RA1 which is present on non-immune cells in many organs and the shared subunit IL10RB. Ligation of IL22RA1 with IL22 induces activation of the tyrosine kinases JAK1 and TYK2, which in turn activates STAT3. In turn, promotes cell survival and proliferation through STAT3, ERK1/2 and PI3K/AKT pathways. Promotes phosphorylation of GSK3B at 'Ser-9' and CTTN. Promotes epithelial cell spreading. This Homo sapiens (Human) protein is Interleukin-22 (IL22).